A 260-amino-acid polypeptide reads, in one-letter code: Ribosomal RNA small subunit methyltransferase G (260 aa).

S-adenosyl-L-methionine contacts are provided by residues glycine 94, phenylalanine 99, 117 to 119 (DST), 145 to 146 (AE), and arginine 164. Residues 236–260 (APTPPPYPRSPGTPKRQPLGQSNRP) form a disordered region. Residues 237–246 (PTPPPYPRSP) are compositionally biased toward pro residues.

Belongs to the methyltransferase superfamily. RNA methyltransferase RsmG family.

The protein resides in the cytoplasm. In terms of biological role, specifically methylates the N7 position of a guanine in 16S rRNA. The chain is Ribosomal RNA small subunit methyltransferase G from Synechococcus sp. (strain JA-2-3B'a(2-13)) (Cyanobacteria bacterium Yellowstone B-Prime).